Reading from the N-terminus, the 168-residue chain is Sec-independent protein translocase protein TatB (168 aa).

The helical transmembrane segment at 1-21 threads the bilayer; the sequence is MIDLGISKLALIGAVALIVIG. Disordered regions lie at residues 92–132 and 146–168; these read FDGS…QGAR and VQSG…SFFE. Over residues 94–107 the composition is skewed to low complexity; it reads GSASSSSSSDTGSG. A compositionally biased stretch (basic residues) spans 117 to 126; sequence KSHNGRKSWR.

Belongs to the TatB family. The Tat system comprises two distinct complexes: a TatABC complex, containing multiple copies of TatA, TatB and TatC subunits, and a separate TatA complex, containing only TatA subunits. Substrates initially bind to the TatABC complex, which probably triggers association of the separate TatA complex to form the active translocon.

It is found in the cell inner membrane. Its function is as follows. Part of the twin-arginine translocation (Tat) system that transports large folded proteins containing a characteristic twin-arginine motif in their signal peptide across membranes. Together with TatC, TatB is part of a receptor directly interacting with Tat signal peptides. TatB may form an oligomeric binding site that transiently accommodates folded Tat precursor proteins before their translocation. In Cupriavidus metallidurans (strain ATCC 43123 / DSM 2839 / NBRC 102507 / CH34) (Ralstonia metallidurans), this protein is Sec-independent protein translocase protein TatB.